A 76-amino-acid polypeptide reads, in one-letter code: RNA-binding protein KhpA (76 aa).

Residues 29–76 (SLHIELSVHPDDMGKVIGKQGRTAKALRSVVYAAATKQKRRVRLDIID) form the KH domain.

It belongs to the KhpA RNA-binding protein family. In terms of assembly, forms a complex with KhpB.

The protein resides in the cytoplasm. A probable RNA chaperone. Forms a complex with KhpB which binds to cellular RNA and controls its expression. Plays a role in peptidoglycan (PG) homeostasis and cell length regulation. The polypeptide is RNA-binding protein KhpA (Halalkalibacterium halodurans (strain ATCC BAA-125 / DSM 18197 / FERM 7344 / JCM 9153 / C-125) (Bacillus halodurans)).